The following is a 202-amino-acid chain: MKIVLASNNPGKLAELQALLAPLGLELLSQAELGIPEAEEPFRTFVENALAKARHASRLSGLSALADDAGLCVDAFGGLPGVDTAFYATRFGYAKGDNNNVRALLEQMAHLTQPGQRRAALVSTLVAVRSADDPEPLIASGRVAGEIALQPVGSNGFGFDPVMFIPEFAQTFAQLPVSVKNANSHRGKATAQMIALLRERWL.

Residue 7–12 coordinates substrate; sequence SNNPGK. Mg(2+)-binding residues include Glu39 and Asp68. The active-site Proton acceptor is Asp68. Substrate-binding positions include Ala69, 157–160, Lys180, and 185–186; these read FGFD and HR.

Belongs to the HAM1 NTPase family. In terms of assembly, homodimer. Requires Mg(2+) as cofactor.

It catalyses the reaction XTP + H2O = XMP + diphosphate + H(+). It carries out the reaction dITP + H2O = dIMP + diphosphate + H(+). The enzyme catalyses ITP + H2O = IMP + diphosphate + H(+). Pyrophosphatase that catalyzes the hydrolysis of nucleoside triphosphates to their monophosphate derivatives, with a high preference for the non-canonical purine nucleotides XTP (xanthosine triphosphate), dITP (deoxyinosine triphosphate) and ITP. Seems to function as a house-cleaning enzyme that removes non-canonical purine nucleotides from the nucleotide pool, thus preventing their incorporation into DNA/RNA and avoiding chromosomal lesions. The sequence is that of dITP/XTP pyrophosphatase from Polaromonas naphthalenivorans (strain CJ2).